The chain runs to 249 residues: 2-C-methyl-D-erythritol 4-phosphate cytidylyltransferase (249 aa).

It belongs to the IspD/TarI cytidylyltransferase family. IspD subfamily.

The catalysed reaction is 2-C-methyl-D-erythritol 4-phosphate + CTP + H(+) = 4-CDP-2-C-methyl-D-erythritol + diphosphate. It participates in isoprenoid biosynthesis; isopentenyl diphosphate biosynthesis via DXP pathway; isopentenyl diphosphate from 1-deoxy-D-xylulose 5-phosphate: step 2/6. Functionally, catalyzes the formation of 4-diphosphocytidyl-2-C-methyl-D-erythritol from CTP and 2-C-methyl-D-erythritol 4-phosphate (MEP). This is 2-C-methyl-D-erythritol 4-phosphate cytidylyltransferase from Chromohalobacter salexigens (strain ATCC BAA-138 / DSM 3043 / CIP 106854 / NCIMB 13768 / 1H11).